Here is a 170-residue protein sequence, read N- to C-terminus: Lipoprotein signal peptidase (170 aa).

3 helical membrane-spanning segments follow: residues 12-32, 67-87, and 94-113; these read WYWI…WVLS, WQRW…SVWL, and MWRL…GNLI. Active-site residues include Asp-123 and Asp-141. The helical transmembrane segment at 133 to 153 threads the bilayer; it reads HFPAFNIADSAICIGAGLIIL.

This sequence belongs to the peptidase A8 family.

The protein resides in the cell inner membrane. The catalysed reaction is Release of signal peptides from bacterial membrane prolipoproteins. Hydrolyzes -Xaa-Yaa-Zaa-|-(S,diacylglyceryl)Cys-, in which Xaa is hydrophobic (preferably Leu), and Yaa (Ala or Ser) and Zaa (Gly or Ala) have small, neutral side chains.. It functions in the pathway protein modification; lipoprotein biosynthesis (signal peptide cleavage). Its function is as follows. This protein specifically catalyzes the removal of signal peptides from prolipoproteins. The chain is Lipoprotein signal peptidase from Shewanella piezotolerans (strain WP3 / JCM 13877).